Here is a 291-residue protein sequence, read N- to C-terminus: 5'-3' exonuclease (291 aa).

Positions 176-269 constitute a 5'-3' exonuclease domain; that stretch reads APYQVVEYKG…DLTGLKPIQK (94 aa).

Its function is as follows. 5'-3' exonuclease acting preferentially on double-stranded DNA. This Mycoplasma genitalium (strain ATCC 33530 / DSM 19775 / NCTC 10195 / G37) (Mycoplasmoides genitalium) protein is 5'-3' exonuclease (polA).